Consider the following 486-residue polypeptide: Probable glycine dehydrogenase (decarboxylating) subunit 2 (486 aa).

Lysine 269 bears the N6-(pyridoxal phosphate)lysine mark.

The protein belongs to the GcvP family. C-terminal subunit subfamily. In terms of assembly, the glycine cleavage system is composed of four proteins: P, T, L and H. In this organism, the P 'protein' is a heterodimer of two subunits. Pyridoxal 5'-phosphate serves as cofactor.

The catalysed reaction is N(6)-[(R)-lipoyl]-L-lysyl-[glycine-cleavage complex H protein] + glycine + H(+) = N(6)-[(R)-S(8)-aminomethyldihydrolipoyl]-L-lysyl-[glycine-cleavage complex H protein] + CO2. Functionally, the glycine cleavage system catalyzes the degradation of glycine. The P protein binds the alpha-amino group of glycine through its pyridoxal phosphate cofactor; CO(2) is released and the remaining methylamine moiety is then transferred to the lipoamide cofactor of the H protein. This Chlorobium phaeobacteroides (strain DSM 266 / SMG 266 / 2430) protein is Probable glycine dehydrogenase (decarboxylating) subunit 2.